The sequence spans 269 residues: Formamidopyrimidine-DNA glycosylase (269 aa).

Pro2 serves as the catalytic Schiff-base intermediate with DNA. Residue Glu3 is the Proton donor of the active site. Lys57 acts as the Proton donor; for beta-elimination activity in catalysis. Residues His90, Arg109, and Lys150 each coordinate DNA. An FPG-type zinc finger spans residues 235 to 269; sequence QVYGRKGEPCRVCGTPIVATKHAQRATFYCRHCQK. The active-site Proton donor; for delta-elimination activity is the Arg259.

It belongs to the FPG family. Monomer. Requires Zn(2+) as cofactor.

The catalysed reaction is Hydrolysis of DNA containing ring-opened 7-methylguanine residues, releasing 2,6-diamino-4-hydroxy-5-(N-methyl)formamidopyrimidine.. It carries out the reaction 2'-deoxyribonucleotide-(2'-deoxyribose 5'-phosphate)-2'-deoxyribonucleotide-DNA = a 3'-end 2'-deoxyribonucleotide-(2,3-dehydro-2,3-deoxyribose 5'-phosphate)-DNA + a 5'-end 5'-phospho-2'-deoxyribonucleoside-DNA + H(+). In terms of biological role, involved in base excision repair of DNA damaged by oxidation or by mutagenic agents. Acts as a DNA glycosylase that recognizes and removes damaged bases. Has a preference for oxidized purines, such as 7,8-dihydro-8-oxoguanine (8-oxoG). Has AP (apurinic/apyrimidinic) lyase activity and introduces nicks in the DNA strand. Cleaves the DNA backbone by beta-delta elimination to generate a single-strand break at the site of the removed base with both 3'- and 5'-phosphates. In Salmonella paratyphi C (strain RKS4594), this protein is Formamidopyrimidine-DNA glycosylase.